A 628-amino-acid polypeptide reads, in one-letter code: Biosynthetic arginine decarboxylase (628 aa).

Position 99 is an N6-(pyridoxal phosphate)lysine (K99). 279–289 (VDVGGGLGIDY) provides a ligand contact to substrate.

It belongs to the Orn/Lys/Arg decarboxylase class-II family. SpeA subfamily. The cofactor is Mg(2+). It depends on pyridoxal 5'-phosphate as a cofactor.

The enzyme catalyses L-arginine + H(+) = agmatine + CO2. Functionally, catalyzes the biosynthesis of agmatine from arginine. The sequence is that of Biosynthetic arginine decarboxylase from Xylella fastidiosa (strain 9a5c).